A 598-amino-acid chain; its full sequence is Trichothecene efflux pump TRI12 (598 aa).

The helical transmembrane segment at 42-62 threads the bilayer; it reads IVASFAAFSMNVVATYFVLQA. N79 is a glycosylation site (N-linked (GlcNAc...) asparagine). The next 2 membrane-spanning stretches (helical) occupy residues 109–129 and 135–155; these read PFVI…CTAT and LAAM…PLFI. A glycan (N-linked (GlcNAc...) asparagine) is linked at N161. Transmembrane regions (helical) follow at residues 165-185, 197-217, 241-261, 273-293, 312-332, 356-376, 381-401, 409-429, 442-462, and 533-553; these read FLGL…SPYL, WIFY…IIWY, WIGI…VSWG, VIGL…YEVY, FVCI…LVIM, ATAS…FHLV, WQIL…SSIN, IALS…TMLL, AFAV…AAFI, and ANVY…SLCM. The disordered stretch occupies residues 579 to 598; it reads LEGNSESQPSPIILSMADKE.

The protein belongs to the major facilitator superfamily.

Its subcellular location is the cell membrane. In terms of biological role, efflux pump that provides the dual role of trichothecene export and self-protection by allowing the fungus to evade the harmful effect of its own trichothecene production. This Fusarium sporotrichioides protein is Trichothecene efflux pump TRI12.